A 217-amino-acid chain; its full sequence is Nascent polypeptide-associated complex subunit alpha (217 aa).

A disordered region spans residues 1-45 (MPELTEIKSEAAPSTSAEAKPEDVRVEDDGSDSDSDGGMPGLEEA). Positions 19–28 (AKPEDVRVED) are enriched in basic and acidic residues. The region spanning 70 to 135 (SRGEKKARKI…AKIEDLSQQA (66 aa)) is the NAC-A/B domain. The interval 154–177 (SVGATTSVAPIAEEDEEDVDDTGV) is disordered. Residues 165-176 (AEEDEEDVDDTG) show a composition bias toward acidic residues. One can recognise a UBA domain in the interval 177–217 (VDEKDIELVITQANTTRAKAIKALKNNNNDIVNAIMELTML).

The protein belongs to the NAC-alpha family. Part of the nascent polypeptide-associated complex (NAC), consisting of Nac-alpha and bicaudal (bic).

Functionally, may promote appropriate targeting of ribosome-nascent polypeptide complexes. Required for correct localization of the osk/oskar protein to the posterior pole during embryonic development. The osk protein directs the recruitment of molecules responsible for posterior body patterning and germline formation in the embryo. This is Nascent polypeptide-associated complex subunit alpha (Nacalpha) from Drosophila melanogaster (Fruit fly).